The following is a 679-amino-acid chain: Sodium-dependent phosphate transporter 1 (679 aa).

Helical transmembrane passes span Tyr21–Ala41, Ala62–Ser82, Gly100–Ala120, Ile158–Phe178, Ala203–Phe223, and Gly230–Val250. Residues Ser265 and Ser269 each carry the phosphoserine modification. 4 consecutive transmembrane segments (helical) span residues Val511–Gly531, Val558–Val578, Phe600–Ile620, and Ile650–Ala670. Positions Asp550–Val558 are a.

Belongs to the inorganic phosphate transporter (PiT) (TC 2.A.20) family. As to expression, ubiquitously expressed.

It localises to the cell membrane. The enzyme catalyses 2 Na(+)(out) + phosphate(out) = 2 Na(+)(in) + phosphate(in). Its function is as follows. Sodium-phosphate symporter which preferentially transports the monovalent form of phosphate with a stoichiometry of two sodium ions per phosphate ion. May play a role in extracellular matrix and cartilage calcification as well as in vascular calcification. Essential for cell proliferation but this function is independent of its phosphate transporter activity. In terms of biological role, (Microbial infection) May function as a retroviral receptor as it confers human cells susceptibility to infection to Gibbon Ape Leukemia Virus (GaLV), Simian sarcoma-associated virus (SSAV) and Feline leukemia virus subgroup B (FeLV-B) as well as 10A1 murine leukemia virus (10A1 MLV). The protein is Sodium-dependent phosphate transporter 1 (SLC20A1) of Homo sapiens (Human).